The primary structure comprises 593 residues: Kelch-like protein 2 (593 aa).

The tract at residues 1-29 is disordered; it reads METPPLPPACTKQGHQKPLDSKDENPEKH. The span at 17-29 shows a compositional bias: basic and acidic residues; the sequence is KPLDSKDENPEKH. Residues 56–123 enclose the BTB domain; that stretch reads CDVTIVAEDM…VYTAEIQVTE (68 aa). 6 Kelch repeats span residues 308–353, 354–400, 402–447, 449–496, 497–543, and 545–591; these read LMVV…YMAG, LVFA…VLNG, LYAV…VVGG, LYAV…VLNN, LLYA…AVNG, and LYVV…VIDK.

As to quaternary structure, component of the BCR(KLHL2) E3 ubiquitin ligase complex, at least composed of CUL3 and KLHL2 and RBX1. Binds actin. Interacts with KLHL12. Interacts (via N-terminus) with FYN (via SH3 domain).

The protein resides in the cytoplasm. Its subcellular location is the cytoskeleton. It localises to the cell projection. It is found in the ruffle. The protein localises to the lamellipodium. The protein resides in the cytosol. The protein operates within protein modification; protein ubiquitination. Functionally, substrate-specific adapter of a BCR (BTB-CUL3-RBX1) E3 ubiquitin ligase complex that mediates the ubiquitination of target proteins, such as NPTXR, WNK1, WNK3 and WNK4, leading most often to their proteasomal degradation. The BCR(KLHL2) complex catalyzes ubiquitination and degradation of NPTXR. Responsible for degradative ubiquitination of the WNK kinases WNK1, WNK3 and WNK4. Plays a role in the reorganization of the actin cytoskeleton. Promotes growth of cell projections in oligodendrocyte precursors. The polypeptide is Kelch-like protein 2 (Mus musculus (Mouse)).